The primary structure comprises 714 residues: Calpain-1 catalytic subunit (714 aa).

Residues 55 to 354 (LFRDEAFPPV…FTRLEICNLT (300 aa)) form the Calpain catalytic domain. 2 residues coordinate Ca(2+): glutamine 109 and aspartate 114. Catalysis depends on residues cysteine 115, histidine 272, and asparagine 296. Residues asparagine 316, aspartate 318, and aspartate 323 each coordinate Ca(2+). Residue threonine 354 is modified to Phosphothreonine. Residues 355–526 (PDALKSRTIR…KSAGTAELDD (172 aa)) are domain III. The linker stretch occupies residues 527 to 542 (QIQANLPDEQVLSEEE). 4 EF-hand domains span residues 541–576 (EEID…IISK), 585–618 (FSLE…NRIR), 615–650 (NRIR…AGFK), and 680–714 (VRLE…TMFA). Residues 543 to 713 (IDENFKALFR…LFKWLQLTMF (171 aa)) are domain IV. Residues aspartate 598, aspartate 600, asparagine 602, lysine 604, glutamate 609, aspartate 628, aspartate 630, serine 632, serine 634, and glutamate 639 each contribute to the Ca(2+) site.

The protein belongs to the peptidase C2 family. In terms of assembly, forms a heterodimer with a small (regulatory) subunit CAPNS1. It depends on Ca(2+) as a cofactor. Post-translationally, undergoes calcium-induced successive autoproteolytic cleavages that generate a membrane-bound 78 kDa active form and an intracellular 75 kDa active form. Calpastatin reduces with high efficiency the transition from 78 kDa to 75 kDa calpain forms.

It localises to the cytoplasm. Its subcellular location is the cell membrane. It carries out the reaction Broad endopeptidase specificity.. Activated by micromolar concentrations of calcium and inhibited by calpastatin. Its function is as follows. Calcium-regulated non-lysosomal thiol-protease which catalyzes limited proteolysis of substrates involved in cytoskeletal remodeling and signal transduction. Proteolytically cleaves CTBP1. Cleaves and activates caspase-7 (CASP7). This Pongo abelii (Sumatran orangutan) protein is Calpain-1 catalytic subunit.